The chain runs to 607 residues: MASLKELLPTPKAAASTFYDHSSDPWFKERYGGESAQSDAAAAAAKPSGPAKPVPPYGKRGGFVPRRPEDFGDGGAFPEIHVAQYPLGMGRRDEKGGSKILALTVDAKGSVAFDAVVKQGENASKIVYSKHSDLVPKIATADSEATADDEEYQKQIEETTERTKAALEKVVNVRLSAAQPKNVPTHDSESKFIKYKPSQQSAAFNSGAKERIIRMSEMAQDPLEPPKFKHKRVPRASGSPPVPVMHSPPRPVTVKDQQDWKIPPCISNWKNPKGYTIPLDKRLAADGRGLQEVQINDNFAKLSEALYVAEQKAREAVQMRSKVQRELQLKEKERKEQELRALAQKARMERTGAPPAPTGVPAGGGRGAVDDREEDMDLEQPREQRRESREEREARIERDRIREERRRERERERRLEARDAAMGKKSKLTRDRDRDVSEKIALGMASTGGAKGGEVMYDQRLFNQDKGMDSGFATDDQYNIYSKGLFTAQPTLSTLYRPKKDGDSDVYGDADEQLEKVMKTDRFKPDKGFSGASERSGKRDRPVEFDKQEENDPFGLDQFLTEVKKGKKAVEKIGSGGAMRASGGSSMRDDYEGGGSGRSRINFERGR.

Disordered regions lie at residues 29–77 (ERYG…GGAF), 178–205 (AQPK…AAFN), 217–265 (EMAQ…IPPC), 327–434 (LQLK…DRDR), and 516–607 (KVMK…ERGR). Over residues 35 to 49 (SAQSDAAAAAAKPSG) the composition is skewed to low complexity. An SNW region spans residues 190–353 (SKFIKYKPSQ…QKARMERTGA (164 aa)). A compositionally biased stretch (pro residues) spans 240 to 251 (PPVPVMHSPPRP). 2 coiled-coil regions span residues 313-349 (AREA…ARME) and 391-418 (EREA…LEAR). Basic and acidic residues-rich tracts occupy residues 327–339 (LQLK…EQEL), 379–434 (EQPR…DRDR), 516–527 (KVMKTDRFKPDK), 535–550 (RSGK…KQEE), and 562–571 (EVKKGKKAVE).

Belongs to the SNW family. Interacts with FLO6/SIP4. Interacts with DIS1. As to expression, widely expressed.

It localises to the nucleus. In terms of biological role, acts as a positive regulator of drought and salt tolerance. Acts as a positive regulator of cell viability. This chain is SNW/SKI-interacting protein A, found in Oryza sativa subsp. japonica (Rice).